Reading from the N-terminus, the 308-residue chain is Homeobox protein HMX3 (308 aa).

Disordered stretches follow at residues 1 to 57 (MPET…GFAL) and 107 to 184 (AEKS…KKKT). A compositionally biased stretch (pro residues) spans 9–19 (PSAPPPPPPPK). Composition is skewed to basic and acidic residues over residues 135–144 (AEQKERDPKS) and 156–177 (EEGK…PEKK). Residues 181–240 (KKKTRTVFSRSQVFQLESTFDMKRYLSSSERAGLAASLHLTETQVKIWFQNRRNKWKRQL) constitute a DNA-binding region (homeobox).

The protein belongs to the HMX homeobox family.

The protein localises to the nucleus. Transcription factor involved in specification of neuronal cell types and which is required for inner ear and hypothalamus development. Binds to the 5'-CAAGTG-3' core sequence. The sequence is that of Homeobox protein HMX3 (HMX3) from Gallus gallus (Chicken).